The primary structure comprises 518 residues: Flagellin (518 aa).

The protein belongs to the bacterial flagellin family.

It localises to the secreted. The protein resides in the bacterial flagellum. Flagellin is the subunit protein which polymerizes to form the filaments of bacterial flagella. The polypeptide is Flagellin (flaA) (Aquifex aeolicus (strain VF5)).